The primary structure comprises 156 residues: Histidine-containing phosphotransfer protein 2 (156 aa).

Position 1 is an N-acetylmethionine (Met1). An HPt domain is found at Ser40–Gly147. His82 carries the post-translational modification Phosphohistidine.

Interacts with the B-type response regulators ARR1, ARR2 and ARR10. Binds to AHK1, AHK2, AHK3, AHK4, AHK5, ETR1 and CKI1. Post-translationally, two-component system major event consists of a His-to-Asp phosphorelay between a sensor histidine kinase (HK) and a response regulator (RR). In plants, the His-to-Asp phosphorelay involves an additional intermediate named Histidine-containing phosphotransfer protein (HPt). This multistep phosphorelay consists of a His-Asp-His-Asp sequential transfer of a phosphate group between first a His and an Asp of the HK protein, followed by the transfer to a conserved His of the HPt protein and finally the transfer to an Asp in the receiver domain of the RR protein. In terms of tissue distribution, strongly expressed in flowers and roots. Detected also in leaves, siliques and stems.

It localises to the cytoplasm. The protein localises to the cytosol. Its subcellular location is the nucleus. In terms of biological role, functions as a two-component phosphorelay mediators between cytokinin sensor histidine kinases and response regulator (B-type ARRs). Plays an important role in propagating cytokinin signal transduction through the multistep His-to-Asp phosphorelay. This chain is Histidine-containing phosphotransfer protein 2 (AHP2), found in Arabidopsis thaliana (Mouse-ear cress).